The following is a 113-amino-acid chain: uncharacterized protein (113 aa).

Positions 78-113 (YCNRGSERTNQGNRGSAPSKILLPRTIADPFRGGPE) are disordered.

This is an uncharacterized protein from Halobacterium phage phiH (Bacteriophage phi-H).